A 503-amino-acid polypeptide reads, in one-letter code: Probable cytosol aminopeptidase (503 aa).

2 residues coordinate Mn(2+): Lys-270 and Asp-275. Lys-282 is a catalytic residue. Positions 293, 352, and 354 each coordinate Mn(2+). Residue Arg-356 is part of the active site.

The protein belongs to the peptidase M17 family. Mn(2+) serves as cofactor.

The protein localises to the cytoplasm. It carries out the reaction Release of an N-terminal amino acid, Xaa-|-Yaa-, in which Xaa is preferably Leu, but may be other amino acids including Pro although not Arg or Lys, and Yaa may be Pro. Amino acid amides and methyl esters are also readily hydrolyzed, but rates on arylamides are exceedingly low.. The catalysed reaction is Release of an N-terminal amino acid, preferentially leucine, but not glutamic or aspartic acids.. Its function is as follows. Presumably involved in the processing and regular turnover of intracellular proteins. Catalyzes the removal of unsubstituted N-terminal amino acids from various peptides. This is Probable cytosol aminopeptidase from Erwinia tasmaniensis (strain DSM 17950 / CFBP 7177 / CIP 109463 / NCPPB 4357 / Et1/99).